The primary structure comprises 355 residues: Trans-3-hydroxy-L-proline dehydratase (355 aa).

Residue C111 is the Proton acceptor of the active site. Residues 112–113 (GH) and 276–277 (GS) contribute to the substrate site.

Belongs to the proline racemase family. In terms of assembly, homodimer.

The catalysed reaction is trans-3-hydroxy-L-proline = 1-pyrroline-2-carboxylate + H2O. Catalyzes the dehydration of trans-3-hydroxy-L-proline (t3LHyp) to Delta(1)-pyrroline-2-carboxylate (Pyr2C). Together with LhpI, is involved in a metabolic pathway that converts t3LHyp to L-proline. The polypeptide is Trans-3-hydroxy-L-proline dehydratase (Colwellia psychrerythraea (strain 34H / ATCC BAA-681) (Vibrio psychroerythus)).